The primary structure comprises 225 residues: NAD(P)H-quinone oxidoreductase subunit K, chloroplastic (225 aa).

Residues Cys-43, Cys-44, Cys-108, and Cys-139 each coordinate [4Fe-4S] cluster.

Belongs to the complex I 20 kDa subunit family. NDH is composed of at least 16 different subunits, 5 of which are encoded in the nucleus. [4Fe-4S] cluster serves as cofactor.

The protein resides in the plastid. It is found in the chloroplast thylakoid membrane. The enzyme catalyses a plastoquinone + NADH + (n+1) H(+)(in) = a plastoquinol + NAD(+) + n H(+)(out). It catalyses the reaction a plastoquinone + NADPH + (n+1) H(+)(in) = a plastoquinol + NADP(+) + n H(+)(out). Functionally, NDH shuttles electrons from NAD(P)H:plastoquinone, via FMN and iron-sulfur (Fe-S) centers, to quinones in the photosynthetic chain and possibly in a chloroplast respiratory chain. The immediate electron acceptor for the enzyme in this species is believed to be plastoquinone. Couples the redox reaction to proton translocation, and thus conserves the redox energy in a proton gradient. This chain is NAD(P)H-quinone oxidoreductase subunit K, chloroplastic, found in Atropa belladonna (Belladonna).